The following is a 143-amino-acid chain: Nucleoside diphosphate kinase (143 aa).

Residues lysine 11, phenylalanine 59, arginine 87, threonine 93, arginine 104, and asparagine 114 each contribute to the ATP site. The active-site Pros-phosphohistidine intermediate is the histidine 117.

The protein belongs to the NDK family. As to quaternary structure, homotetramer. Mg(2+) serves as cofactor.

The protein resides in the cytoplasm. It catalyses the reaction a 2'-deoxyribonucleoside 5'-diphosphate + ATP = a 2'-deoxyribonucleoside 5'-triphosphate + ADP. The catalysed reaction is a ribonucleoside 5'-diphosphate + ATP = a ribonucleoside 5'-triphosphate + ADP. Major role in the synthesis of nucleoside triphosphates other than ATP. The ATP gamma phosphate is transferred to the NDP beta phosphate via a ping-pong mechanism, using a phosphorylated active-site intermediate. The chain is Nucleoside diphosphate kinase from Salmonella agona (strain SL483).